The primary structure comprises 572 residues: Mitochondrial distribution and morphology protein 34 (572 aa).

The SMP-LTD domain maps to Met-1–Leu-195. 4 disordered regions span residues Leu-208–Leu-236, Pro-296–Pro-405, Arg-455–Asn-518, and Asn-551–His-572. Residues Pro-296 to Phe-347 are compositionally biased toward polar residues. Residues Arg-358–Arg-370 show a composition bias toward basic residues. The span at Val-371–Asp-381 shows a compositional bias: basic and acidic residues. Polar residues-rich tracts occupy residues Ser-387 to Ile-401 and Ala-498 to Ser-511.

This sequence belongs to the MDM34 family. Component of the ER-mitochondria encounter structure (ERMES) or MDM complex, composed of mmm1, mdm10, mdm12 and mdm34.

It is found in the mitochondrion outer membrane. Functionally, component of the ERMES/MDM complex, which serves as a molecular tether to connect the endoplasmic reticulum (ER) and mitochondria. Components of this complex are involved in the control of mitochondrial shape and protein biogenesis, and function in nonvesicular lipid trafficking between the ER and mitochondria. Mdm34 is required for the interaction of the ER-resident membrane protein mmm1 and the outer mitochondrial membrane-resident beta-barrel protein mdm10. In Neosartorya fischeri (strain ATCC 1020 / DSM 3700 / CBS 544.65 / FGSC A1164 / JCM 1740 / NRRL 181 / WB 181) (Aspergillus fischerianus), this protein is Mitochondrial distribution and morphology protein 34.